The following is a 156-amino-acid chain: 6,7-dimethyl-8-ribityllumazine synthase (156 aa).

5-amino-6-(D-ribitylamino)uracil contacts are provided by residues phenylalanine 22, 57-59 (AYE), and 81-83 (TVI). 86 to 87 (GT) is a (2S)-2-hydroxy-3-oxobutyl phosphate binding site. Histidine 89 (proton donor) is an active-site residue. Residue phenylalanine 114 participates in 5-amino-6-(D-ribitylamino)uracil binding. Arginine 128 lines the (2S)-2-hydroxy-3-oxobutyl phosphate pocket.

This sequence belongs to the DMRL synthase family. Forms an icosahedral capsid composed of 60 subunits, arranged as a dodecamer of pentamers.

It catalyses the reaction (2S)-2-hydroxy-3-oxobutyl phosphate + 5-amino-6-(D-ribitylamino)uracil = 6,7-dimethyl-8-(1-D-ribityl)lumazine + phosphate + 2 H2O + H(+). It participates in cofactor biosynthesis; riboflavin biosynthesis; riboflavin from 2-hydroxy-3-oxobutyl phosphate and 5-amino-6-(D-ribitylamino)uracil: step 1/2. In terms of biological role, catalyzes the formation of 6,7-dimethyl-8-ribityllumazine by condensation of 5-amino-6-(D-ribitylamino)uracil with 3,4-dihydroxy-2-butanone 4-phosphate. This is the penultimate step in the biosynthesis of riboflavin. This Yersinia enterocolitica serotype O:8 / biotype 1B (strain NCTC 13174 / 8081) protein is 6,7-dimethyl-8-ribityllumazine synthase.